A 484-amino-acid polypeptide reads, in one-letter code: UBX domain-containing protein 11 (484 aa).

The disordered stretch occupies residues 1 to 28; the sequence is MSSPLASLSKTRKVPLESESVNPGRRGI. Residues 69-147 are a coiled coil; that stretch reads HDSELMASMT…IGEMERFLSD (79 aa). The SEP domain occupies 227–291; sequence LEPIPLKVYR…VSDLRNQIYP (65 aa). In terms of domain architecture, UBX spans 389–466; that stretch reads PMPLLSMLRI…GLVPNATLLL (78 aa). 2 positions are modified to phosphoserine: Ser478 and Ser482.

In terms of assembly, interacts with GNA12, GNA13, RND1, RND2 and RND3.

It localises to the cytoplasm. Its subcellular location is the cytoskeleton. May be involved in the reorganization of actin cytoskeleton mediated by RND1, RND2 and RND3. Promotes RHOA activation mediated by GNA12 and GNA13. This Mus musculus (Mouse) protein is UBX domain-containing protein 11 (Ubxn11).